A 677-amino-acid chain; its full sequence is UvrABC system protein B (677 aa).

The Helicase ATP-binding domain maps to 25 to 412; the sequence is QGVNGGERYQ…GGEVAQQVIR (388 aa). 38–45 contacts ATP; that stretch reads GATGTGKT. The short motif at 91-114 is the Beta-hairpin element; it reads YYDYYQPEAYVPVSDTYIAKTASI. Residues 429 to 591 enclose the Helicase C-terminal domain; it reads QVDDLLGEIR…IVPTAAGKKA (163 aa). In terms of domain architecture, UVR spans 639-674; that stretch reads PELIDQLEGKMKEAAKKLDFEDAANLRDRIKQLRQK.

It belongs to the UvrB family. Forms a heterotetramer with UvrA during the search for lesions. Interacts with UvrC in an incision complex.

It is found in the cytoplasm. Its function is as follows. The UvrABC repair system catalyzes the recognition and processing of DNA lesions. A damage recognition complex composed of 2 UvrA and 2 UvrB subunits scans DNA for abnormalities. Upon binding of the UvrA(2)B(2) complex to a putative damaged site, the DNA wraps around one UvrB monomer. DNA wrap is dependent on ATP binding by UvrB and probably causes local melting of the DNA helix, facilitating insertion of UvrB beta-hairpin between the DNA strands. Then UvrB probes one DNA strand for the presence of a lesion. If a lesion is found the UvrA subunits dissociate and the UvrB-DNA preincision complex is formed. This complex is subsequently bound by UvrC and the second UvrB is released. If no lesion is found, the DNA wraps around the other UvrB subunit that will check the other stand for damage. The chain is UvrABC system protein B from Parasynechococcus marenigrum (strain WH8102).